The chain runs to 491 residues: Ubiquitin carboxyl-terminal hydrolase 30 (491 aa).

Over 1–31 (MPWCKQGTTDKLVREFLRTGAAARNKMMKNW) the chain is Mitochondrial intermembrane. The helical transmembrane segment at 32–52 (GVIGGIAAAMAAGVYVLWGPI) threads the bilayer. Topologically, residues 53–491 (SDRRKKRKGM…MQRPGLRVEE (439 aa)) are cytoplasmic. In terms of domain architecture, USP spans 64–482 (PGLLNLGNTC…SAYLLFYERM (419 aa)). Catalysis depends on Cys-73, which acts as the Nucleophile. Residues 346–355 (AQSQQKTSRT) show a composition bias toward polar residues. A disordered region spans residues 346–365 (AQSQQKTSRTNKAKASADPK). His-432 serves as the catalytic Proton acceptor.

This sequence belongs to the peptidase C19 family.

The protein resides in the mitochondrion outer membrane. It carries out the reaction Thiol-dependent hydrolysis of ester, thioester, amide, peptide and isopeptide bonds formed by the C-terminal Gly of ubiquitin (a 76-residue protein attached to proteins as an intracellular targeting signal).. Functionally, deubiquitinating enzyme that acts as a key inhibitor of mitophagy by counteracting the action of parkin (PRKN). This chain is Ubiquitin carboxyl-terminal hydrolase 30 (usp30), found in Danio rerio (Zebrafish).